The chain runs to 239 residues: Phosphoribosylaminoimidazole-succinocarboxamide synthase (239 aa).

This sequence belongs to the SAICAR synthetase family.

It catalyses the reaction 5-amino-1-(5-phospho-D-ribosyl)imidazole-4-carboxylate + L-aspartate + ATP = (2S)-2-[5-amino-1-(5-phospho-beta-D-ribosyl)imidazole-4-carboxamido]succinate + ADP + phosphate + 2 H(+). It functions in the pathway purine metabolism; IMP biosynthesis via de novo pathway; 5-amino-1-(5-phospho-D-ribosyl)imidazole-4-carboxamide from 5-amino-1-(5-phospho-D-ribosyl)imidazole-4-carboxylate: step 1/2. The sequence is that of Phosphoribosylaminoimidazole-succinocarboxamide synthase from Bacillus cereus (strain 03BB102).